The following is a 192-amino-acid chain: Elongation factor P (192 aa).

The residue at position 38 (Lys-38) is an N6-(3,6-diaminohexanoyl)-5-hydroxylysine.

This sequence belongs to the elongation factor P family. Post-translationally, may be beta-lysylated on the epsilon-amino group of Lys-38 by the combined action of EpmA and EpmB, and then hydroxylated on the C5 position of the same residue by EpmC (if this protein is present). Lysylation is critical for the stimulatory effect of EF-P on peptide-bond formation. The lysylation moiety may extend toward the peptidyltransferase center and stabilize the terminal 3-CCA end of the tRNA. Hydroxylation of the C5 position on Lys-38 may allow additional potential stabilizing hydrogen-bond interactions with the P-tRNA.

The protein localises to the cytoplasm. The protein operates within protein biosynthesis; polypeptide chain elongation. Involved in peptide bond synthesis. Alleviates ribosome stalling that occurs when 3 or more consecutive Pro residues or the sequence PPG is present in a protein, possibly by augmenting the peptidyl transferase activity of the ribosome. Modification of Lys-38 is required for alleviation. The sequence is that of Elongation factor P from Mannheimia succiniciproducens (strain KCTC 0769BP / MBEL55E).